A 262-amino-acid chain; its full sequence is Hydroxyethylthiazole kinase (262 aa).

Met50 is a substrate binding site. ATP-binding residues include Arg125 and Thr171. Gly198 serves as a coordination point for substrate.

This sequence belongs to the Thz kinase family. Requires Mg(2+) as cofactor.

It carries out the reaction 5-(2-hydroxyethyl)-4-methylthiazole + ATP = 4-methyl-5-(2-phosphooxyethyl)-thiazole + ADP + H(+). Its pathway is cofactor biosynthesis; thiamine diphosphate biosynthesis; 4-methyl-5-(2-phosphoethyl)-thiazole from 5-(2-hydroxyethyl)-4-methylthiazole: step 1/1. Catalyzes the phosphorylation of the hydroxyl group of 4-methyl-5-beta-hydroxyethylthiazole (THZ). The polypeptide is Hydroxyethylthiazole kinase (Escherichia coli O6:H1 (strain CFT073 / ATCC 700928 / UPEC)).